The sequence spans 845 residues: Protein translocase subunit SecA 1 (845 aa).

Residues glutamine 85, 103–107 (GEGKT), and aspartate 492 each bind ATP.

Belongs to the SecA family. Monomer and homodimer. Part of the essential Sec protein translocation apparatus which comprises SecA, SecYEG and auxiliary proteins SecDF. Other proteins may also be involved.

Its subcellular location is the cell membrane. It is found in the cytoplasm. The catalysed reaction is ATP + H2O + cellular proteinSide 1 = ADP + phosphate + cellular proteinSide 2.. Its function is as follows. Part of the Sec protein translocase complex. Interacts with the SecYEG preprotein conducting channel. Has a central role in coupling the hydrolysis of ATP to the transfer of proteins into and across the cell membrane, serving as an ATP-driven molecular motor driving the stepwise translocation of polypeptide chains across the membrane. This chain is Protein translocase subunit SecA 1, found in Corynebacterium efficiens (strain DSM 44549 / YS-314 / AJ 12310 / JCM 11189 / NBRC 100395).